The primary structure comprises 319 residues: Sulfate adenylyltransferase subunit 2 (319 aa).

Disordered stretches follow at residues 1–22 (MNPGRGGAYAAGRDGTRGTRRP) and 296–319 (RGATRADDKLSEAAMEDRKREGYF).

The protein belongs to the PAPS reductase family. CysD subfamily.

The catalysed reaction is sulfate + ATP + H(+) = adenosine 5'-phosphosulfate + diphosphate. The protein operates within antibiotic biosynthesis; mitomycin C biosynthesis. With CysN forms the ATP sulfurylase (ATPS) that catalyzes the adenylation of sulfate producing adenosine 5'-phosphosulfate (APS) and diphosphate, the first enzymatic step in sulfur assimilation pathway. APS synthesis involves the formation of a high-energy phosphoric-sulfuric acid anhydride bond driven by GTP hydrolysis by CysN coupled to ATP hydrolysis by CysD. The polypeptide is Sulfate adenylyltransferase subunit 2 (mmcV) (Streptomyces lavendulae).